A 136-amino-acid polypeptide reads, in one-letter code: uncharacterized protein (136 aa).

This sequence to E.coli YcgX and YdfO.

This is an uncharacterized protein from Escherichia coli (strain K12).